A 366-amino-acid chain; its full sequence is tRNA/tmRNA (uracil-C(5))-methyltransferase (366 aa).

Q190, Y218, N223, E239, and D299 together coordinate S-adenosyl-L-methionine. Catalysis depends on C324, which acts as the Nucleophile. The active-site Proton acceptor is E358.

Belongs to the class I-like SAM-binding methyltransferase superfamily. RNA M5U methyltransferase family. TrmA subfamily.

The catalysed reaction is uridine(54) in tRNA + S-adenosyl-L-methionine = 5-methyluridine(54) in tRNA + S-adenosyl-L-homocysteine + H(+). The enzyme catalyses uridine(341) in tmRNA + S-adenosyl-L-methionine = 5-methyluridine(341) in tmRNA + S-adenosyl-L-homocysteine + H(+). Its function is as follows. Dual-specificity methyltransferase that catalyzes the formation of 5-methyluridine at position 54 (m5U54) in all tRNAs, and that of position 341 (m5U341) in tmRNA (transfer-mRNA). This is tRNA/tmRNA (uracil-C(5))-methyltransferase from Escherichia coli (strain UTI89 / UPEC).